We begin with the raw amino-acid sequence, 734 residues long: PI-PLC X-box domain-containing protein DDB_G0293730 (734 aa).

Positions 8–70 form a coiled coil; it reads IKNILLKIEK…ELNEKLIVEK (63 aa). In terms of domain architecture, PI-PLC X-box spans 440-604; that stretch reads KLKDRKVRNL…CIYDDLVNPL (165 aa).

The sequence is that of PI-PLC X-box domain-containing protein DDB_G0293730 from Dictyostelium discoideum (Social amoeba).